A 29-amino-acid polypeptide reads, in one-letter code: Potassium-transporting ATPase KdpF subunit (29 aa).

Residues 2–22 (LIGEAVLAVVTVAVVAYLTYV) form a helical membrane-spanning segment.

It belongs to the KdpF family. In terms of assembly, the system is composed of three essential subunits: KdpA, KdpB and KdpC. The complex also contains KdpF, a small non-essential subunit.

Its subcellular location is the cell membrane. Its function is as follows. Part of the high-affinity ATP-driven potassium transport (or Kdp) system, which catalyzes the hydrolysis of ATP coupled with the electrogenic transport of potassium into the cytoplasm. This subunit may be involved in stabilization of the complex. The Kdp system is essential for growth under K(+) limitation, and for survival under desiccation and salt crystal inclusion. The protein is Potassium-transporting ATPase KdpF subunit of Halobacterium salinarum (strain ATCC 29341 / DSM 671 / R1).